The primary structure comprises 379 residues: Sulfate adenylyltransferase (379 aa).

Belongs to the sulfate adenylyltransferase family.

It catalyses the reaction sulfate + ATP + H(+) = adenosine 5'-phosphosulfate + diphosphate. It participates in sulfur metabolism; hydrogen sulfide biosynthesis; sulfite from sulfate: step 1/3. In Pyrococcus abyssi (strain GE5 / Orsay), this protein is Sulfate adenylyltransferase (sat).